The chain runs to 155 residues: Small ribosomal subunit protein uS15 (155 aa).

A compositionally biased stretch (basic residues) spans 1-10; sequence MARMHTRRRG. The disordered stretch occupies residues 1 to 66; it reads MARMHTRRRG…EGVQGTPVPD (66 aa). A compositionally biased stretch (acidic residues) spans 21–33; sequence EPPEWSDVDEDAI. The segment covering 34–45 has biased composition (basic and acidic residues); sequence EERVVELAEQGH.

Belongs to the universal ribosomal protein uS15 family. Part of the 30S ribosomal subunit.

This is Small ribosomal subunit protein uS15 from Halobacterium salinarum (strain ATCC 700922 / JCM 11081 / NRC-1) (Halobacterium halobium).